The chain runs to 68 residues: Sec-independent protein translocase protein TatA (68 aa).

The helical transmembrane segment at 1–21 (MGSLSIWHWLIVLLIVVLVFG) threads the bilayer. The segment at 42 to 68 (GMNEGAKDGQPPAKDAGRIIDGEADKK) is disordered. Residues 56 to 68 (DAGRIIDGEADKK) show a composition bias toward basic and acidic residues.

It belongs to the TatA/E family. In terms of assembly, the Tat system comprises two distinct complexes: a TatABC complex, containing multiple copies of TatA, TatB and TatC subunits, and a separate TatA complex, containing only TatA subunits. Substrates initially bind to the TatABC complex, which probably triggers association of the separate TatA complex to form the active translocon.

It is found in the cell inner membrane. Part of the twin-arginine translocation (Tat) system that transports large folded proteins containing a characteristic twin-arginine motif in their signal peptide across membranes. TatA could form the protein-conducting channel of the Tat system. In Chromobacterium violaceum (strain ATCC 12472 / DSM 30191 / JCM 1249 / CCUG 213 / NBRC 12614 / NCIMB 9131 / NCTC 9757 / MK), this protein is Sec-independent protein translocase protein TatA.